The primary structure comprises 1159 residues: MLDFLAENNLCGQAILRIVSCGNAIIAELLRLSEFIPAVFRLKDRADQQKYGDIIFDFSYFKGPELWESKLDAKPELQDLDEEFRENNIEIVTRFYLAFQSVHKYIVDLNRYLDDLNEGVYIQQTLETVLLNEDGKQLLCEALYLYGVMLLVIDQKIEGEVRERMLVSYYRYSAARSSADSNMDDICKLLRSTGYSSQPGARRPPNYPESYFQRVPINESFISMVIGRLRSDDIYNQVSAYPLPEHRSTALANQAAMLYVILYFEPSILHTHQAKMREIVDKYFPDNWVISIYMGITVNLVDAWEPYKAAKTALNNTLDLSNVREQASRYATVSERVHAQVQQFLKEGYLREEMVLDNIPKLLNCLRDCNVAIRWLMLHTADSACDPNNKRLRQIKDQILTDSRYNPRILFQLLLDTAQFEFILKEMFKQMLSEKQTKWEHYKKEGSERMTELADVFSGVKPLTRVEKNENLQAWFREISKQILSLNYDDSTAAGRKTVQLIQALEEVQEFHQLESNLQVCQFLADTRKFLHQMIRTINIKEEVLITMQIVGDLSFAWQLIDSFTSIMQESIRVNPSMVTKLRATFLKLASALDLPLLRINQANSPDLLSVSQYYSGELVSYVRKVLQIIPESMFTSLLKIIKLQTHDIIEVPTRLDKDKLRDYAQLGPRYEVAKLTHAISIFTEGILMMKTTLVGIIKVDPKQLLEDGIRKELVKRVAFALHRGLIFNPRAKPSELMPKLKELGATMDGFHRSFEYIQDYVNIYGLKIWQEEVSRIINYNVEQECNNFLRTKIQDWQSMYQSTHIPIPKFTPVDESVTFIGRLCREILRITDPKMTCHIDQLNTWYDMKTHQEVTSSRLFSEIQTTLGTFGLNGLDRLLCFMIVKELQNFLSMFQKIILRDRTVQDTLKTLMNAVSPLKSIVANSNKIYFSAIAKTQKIWTAYLEAIMKVGQMQILRQQIANELNYSCRFDSKHLAAALENLNKALLADIEAHYQDPSLPYPKEDNTLLYEITAYLEAAGIHNPLNKIYITTKRLPYFPIVNFLFLIAQLPKLQYNKNLGMVCRKPTDPVDWPPLVLGLLTLLKQFHSRYTEQFLALIGQFICSTVEQCTSQKIPEIPADVVGALLFLEDYARYTKLPRRVAEAHVPNFIFDEFRTVL.

Ser-917 carries the post-translational modification Phosphoserine.

This sequence belongs to the strumpellin family. As to quaternary structure, component of the WASH core complex also described as WASH regulatory complex (SHRC) composed of WASH (WASHC1, WASH2P or WASH3P), WASHC2 (WASHC2A or WASHC2C), WASHC3, WASHC4 and WASHC5. The WASH core complex associates via WASHC2 with the F-actin-capping protein dimer (formed by CAPZA1, CAPZA2 or CAPZA3 and CAPZB) in a transient or substoichiometric manner which was initially described as WASH complex. Interacts with VCP, PI4K2A.

Its subcellular location is the cytoplasm. The protein resides in the cytosol. It localises to the endoplasmic reticulum. It is found in the early endosome. In terms of biological role, acts as a component of the WASH core complex that functions as a nucleation-promoting factor (NPF) at the surface of endosomes, where it recruits and activates the Arp2/3 complex to induce actin polymerization, playing a key role in the fission of tubules that serve as transport intermediates during endosome sorting. May be involved in axonal outgrowth. Involved in cellular localization of ADRB2. Involved in cellular trafficking of BLOC-1 complex cargos such as ATP7A and VAMP7. The chain is WASH complex subunit 5 from Pongo abelii (Sumatran orangutan).